We begin with the raw amino-acid sequence, 348 residues long: MNTTASSPWPPFLQQLLDRQSLTRQQAVQLMEGWLDDDIPPALSGAILAAIQAKGLDPEELTGMAQVLQEQSQGNQGREMVAPLVDTCGTGGDGSSTFNISTAVAFVVAAAGVKVAKHGNRSASSKVGSADVLEALGLNLQAGADQVAAAVSAVGITFLFAPGWHPALKSVAPIRKTLKVRTVFNLLGPLVNPLRPTGQVIGVYSPDFLSVMAIALKNLGTARAMVLHGREQLDEAGLGAPTDIASFNQGEVTPQVLDPQNFGLAPAPLTALKGGDLAENVTILSQVLQGKGTQAQIDAVALNASLALQVGDAVPWGDHGQGIHLAKDILSQGAGWDKLQQLVAFLGS.

5-phospho-alpha-D-ribose 1-diphosphate is bound by residues glycine 89, 92 to 93, threonine 97, 99 to 102, 117 to 125, and serine 129; these read GD, NIST, and KHGNRSASS. An anthranilate-binding site is contributed by glycine 89. Serine 101 contacts Mg(2+). Residue asparagine 120 coordinates anthranilate. An anthranilate-binding site is contributed by arginine 175. Positions 234 and 235 each coordinate Mg(2+).

Belongs to the anthranilate phosphoribosyltransferase family. As to quaternary structure, homodimer. Mg(2+) serves as cofactor.

The catalysed reaction is N-(5-phospho-beta-D-ribosyl)anthranilate + diphosphate = 5-phospho-alpha-D-ribose 1-diphosphate + anthranilate. Its pathway is amino-acid biosynthesis; L-tryptophan biosynthesis; L-tryptophan from chorismate: step 2/5. Catalyzes the transfer of the phosphoribosyl group of 5-phosphorylribose-1-pyrophosphate (PRPP) to anthranilate to yield N-(5'-phosphoribosyl)-anthranilate (PRA). This is Anthranilate phosphoribosyltransferase from Synechocystis sp. (strain ATCC 27184 / PCC 6803 / Kazusa).